The following is a 377-amino-acid chain: Putative glutamate--cysteine ligase 2 (377 aa).

This sequence belongs to the glutamate--cysteine ligase type 2 family. YbdK subfamily.

The catalysed reaction is L-cysteine + L-glutamate + ATP = gamma-L-glutamyl-L-cysteine + ADP + phosphate + H(+). Functionally, ATP-dependent carboxylate-amine ligase which exhibits weak glutamate--cysteine ligase activity. This Pseudomonas aeruginosa (strain ATCC 15692 / DSM 22644 / CIP 104116 / JCM 14847 / LMG 12228 / 1C / PRS 101 / PAO1) protein is Putative glutamate--cysteine ligase 2.